The following is a 136-amino-acid chain: MSATHHKTPLPQGVRLGTVMRIRGVVPDQAGRFHVNLLCGEEQEADAALHFNPRLDTSEVVFNTKQQGKWGREERGTGIPFQRGQPFEVLIITTEEGFKTVIGDDEYLHFHHRMPSSNVRSVEVGGDVQLHSVKIF.

Residues 6–136 (HKTPLPQGVR…DVQLHSVKIF (131 aa)) form the Galectin domain. A beta-D-galactoside is bound at residue 70–76 (WGREERG).

As to quaternary structure, monomer.

The protein localises to the cytoplasm. It localises to the nucleus. It is found in the secreted. Its function is as follows. Could be involved in cell-cell and/or cell-matrix interactions necessary for normal growth control. Pro-apoptotic protein that functions intracellularly upstream of JNK activation and cytochrome c release. The protein is Galectin-7 (Lgals7) of Rattus norvegicus (Rat).